Consider the following 122-residue polypeptide: Large ribosomal subunit protein uL14 (122 aa).

Belongs to the universal ribosomal protein uL14 family. As to quaternary structure, part of the 50S ribosomal subunit. Forms a cluster with proteins L3 and L19. In the 70S ribosome, L14 and L19 interact and together make contacts with the 16S rRNA in bridges B5 and B8.

Its function is as follows. Binds to 23S rRNA. Forms part of two intersubunit bridges in the 70S ribosome. The protein is Large ribosomal subunit protein uL14 of Afipia carboxidovorans (strain ATCC 49405 / DSM 1227 / KCTC 32145 / OM5) (Oligotropha carboxidovorans).